Reading from the N-terminus, the 716-residue chain is Polyribonucleotide nucleotidyltransferase (716 aa).

Mg(2+)-binding residues include Asp-490 and Asp-496. The 60-residue stretch at 556 to 615 (PKIETLTIPTDKIREVIGSGGKVIREIVETSGAKVDINDDGVIKIASNDQAAIKKAYDMI) folds into the KH domain. Positions 625–693 (GQIYTGKVVK…ERGKVRLGMK (69 aa)) constitute an S1 motif domain. The tract at residues 695 to 716 (VDQETGQEIQPEKKEKEEAGEA) is disordered. The segment covering 704-716 (QPEKKEKEEAGEA) has biased composition (basic and acidic residues).

It belongs to the polyribonucleotide nucleotidyltransferase family. The cofactor is Mg(2+).

The protein localises to the cytoplasm. The enzyme catalyses RNA(n+1) + phosphate = RNA(n) + a ribonucleoside 5'-diphosphate. In terms of biological role, involved in mRNA degradation. Catalyzes the phosphorolysis of single-stranded polyribonucleotides processively in the 3'- to 5'-direction. This Cereibacter sphaeroides (strain ATCC 17029 / ATH 2.4.9) (Rhodobacter sphaeroides) protein is Polyribonucleotide nucleotidyltransferase.